Here is a 182-residue protein sequence, read N- to C-terminus: Large ribosomal subunit protein uL6 (182 aa).

This sequence belongs to the universal ribosomal protein uL6 family. As to quaternary structure, part of the 50S ribosomal subunit.

In terms of biological role, this protein binds to the 23S rRNA, and is important in its secondary structure. It is located near the subunit interface in the base of the L7/L12 stalk, and near the tRNA binding site of the peptidyltransferase center. This chain is Large ribosomal subunit protein uL6, found in Aeropyrum pernix (strain ATCC 700893 / DSM 11879 / JCM 9820 / NBRC 100138 / K1).